Reading from the N-terminus, the 337-residue chain is Cytoskeleton protein RodZ (337 aa).

Over 1–111 the chain is Cytoplasmic; sequence MNTEATHDQN…LGKRRKKRDG (111 aa). An HTH cro/C1-type domain is found at 19-71; the sequence is LRNAREQLGLSQQAVAERLCLKVSTVRDIEEDKAPADLASTFLRGYIRSYARL. Residues 30–49 constitute a DNA-binding region (H-T-H motif); it reads QQAVAERLCLKVSTVRDIEE. A helical; Signal-anchor for type II membrane protein membrane pass occupies residues 112–132; that stretch reads WLMTFTWLVLFVVIGLSGAWW. Topologically, residues 133–337 are periplasmic; the sequence is WQDHKAQQEE…TLNAEQSPAQ (205 aa). The segment covering 145–167 has biased composition (polar residues); sequence TMADQSSAELSSNSEQGQSVPLN. The tract at residues 145–218 is disordered; that stretch reads TMADQSSAEL…AVVSPSQANV (74 aa). A compositionally biased stretch (low complexity) spans 168 to 207; the sequence is TSTTTDPATTSTPPASVDTTATNTQTPAVTAPAPAVDPQQ. Positions 208-218 are enriched in polar residues; that stretch reads NAVVSPSQANV.

The protein belongs to the RodZ family.

It is found in the cell inner membrane. Functionally, cytoskeletal protein that is involved in cell-shape control through regulation of the length of the long axis. The sequence is that of Cytoskeleton protein RodZ from Shigella dysenteriae serotype 1 (strain Sd197).